A 416-amino-acid polypeptide reads, in one-letter code: D-amino acid dehydrogenase (416 aa).

Residue 3–17 (ITILGSGVIGVTTAY) coordinates FAD.

This sequence belongs to the DadA oxidoreductase family. FAD serves as cofactor.

The enzyme catalyses a D-alpha-amino acid + A + H2O = a 2-oxocarboxylate + AH2 + NH4(+). Its pathway is amino-acid degradation; D-alanine degradation; NH(3) and pyruvate from D-alanine: step 1/1. Its function is as follows. Oxidative deamination of D-amino acids. In Brucella anthropi (strain ATCC 49188 / DSM 6882 / CCUG 24695 / JCM 21032 / LMG 3331 / NBRC 15819 / NCTC 12168 / Alc 37) (Ochrobactrum anthropi), this protein is D-amino acid dehydrogenase.